Consider the following 191-residue polypeptide: uncharacterized protein (191 aa).

The first 23 residues, 1-23 (MKKTMSAITAAAAVTSCFTGFGA), serve as a signal peptide directing secretion.

This is an uncharacterized protein from Bacillus subtilis (strain 168).